Here is a 619-residue protein sequence, read N- to C-terminus: 1-deoxy-D-xylulose-5-phosphate synthase (619 aa).

Thiamine diphosphate contacts are provided by residues His-63 and 104 to 106 (GHS). Asp-136 contacts Mg(2+). Thiamine diphosphate-binding positions include 137 to 138 (GS), Asn-165, Tyr-272, and Glu-353. Asn-165 provides a ligand contact to Mg(2+).

Belongs to the transketolase family. DXPS subfamily. As to quaternary structure, homodimer. Requires Mg(2+) as cofactor. Thiamine diphosphate is required as a cofactor.

The catalysed reaction is D-glyceraldehyde 3-phosphate + pyruvate + H(+) = 1-deoxy-D-xylulose 5-phosphate + CO2. Its pathway is metabolic intermediate biosynthesis; 1-deoxy-D-xylulose 5-phosphate biosynthesis; 1-deoxy-D-xylulose 5-phosphate from D-glyceraldehyde 3-phosphate and pyruvate: step 1/1. Catalyzes the acyloin condensation reaction between C atoms 2 and 3 of pyruvate and glyceraldehyde 3-phosphate to yield 1-deoxy-D-xylulose-5-phosphate (DXP). The protein is 1-deoxy-D-xylulose-5-phosphate synthase of Wolinella succinogenes (strain ATCC 29543 / DSM 1740 / CCUG 13145 / JCM 31913 / LMG 7466 / NCTC 11488 / FDC 602W) (Vibrio succinogenes).